Consider the following 181-residue polypeptide: Shikimate kinase 2 (181 aa).

12–17 (GCGKTT) is a binding site for ATP. Residues threonine 16 and aspartate 32 each coordinate Mg(2+). Substrate-binding residues include aspartate 34, arginine 58, and glycine 79. Positions 112 to 126 (EAEPEADLRPTLTGK) are LID domain. An ATP-binding site is contributed by arginine 120. Arginine 139 serves as a coordination point for substrate.

This sequence belongs to the shikimate kinase family. AroL subfamily. As to quaternary structure, monomer. Requires Mg(2+) as cofactor.

Its subcellular location is the cytoplasm. It carries out the reaction shikimate + ATP = 3-phosphoshikimate + ADP + H(+). The protein operates within metabolic intermediate biosynthesis; chorismate biosynthesis; chorismate from D-erythrose 4-phosphate and phosphoenolpyruvate: step 5/7. In terms of biological role, catalyzes the specific phosphorylation of the 3-hydroxyl group of shikimic acid using ATP as a cosubstrate. The polypeptide is Shikimate kinase 2 (Salmonella heidelberg (strain SL476)).